An 82-amino-acid polypeptide reads, in one-letter code: Mitotic-spindle organizing protein 1 (82 aa).

N-acetylalanine is present on alanine 2.

This sequence belongs to the MOZART1 family. As to quaternary structure, associates with the gamma-tubulin ring complex (gTuRC) consisting of TUBGCP2, TUBGCP3, TUBGCP4, TUBGCP5 and TUBGCP6 and gamma-tubulin TUBG1 or TUBG2; within the complex, interacts with TUBGCP3 and TUBGCP6 to form a luminal bridge with actin that stabilizes the initial structure during complex assembly. Interacts with TUBG1.

Its subcellular location is the cytoplasm. It is found in the cytoskeleton. The protein localises to the microtubule organizing center. It localises to the centrosome. The protein resides in the spindle. In terms of biological role, required for the recruitment and the assembly of the gamma-tubulin ring complex (gTuRC) at the centrosome. The gTuRC regulates the minus-end nucleation of alpha-beta tubulin heterodimers that grow into microtubule protafilaments, a critical step in centrosome duplication and spindle formation. This chain is Mitotic-spindle organizing protein 1 (MZT1), found in Homo sapiens (Human).